A 662-amino-acid chain; its full sequence is Protein Aster-C (662 aa).

A disordered region spans residues 1–33 (MEGALTARQIVNEGDSSLATELQEEPEESPGPV). In terms of domain architecture, GRAM spans 70 to 176 (EYRQQFTHLP…LIIFRLWQNV (107 aa)). The tract at residues 212–294 (VEENVQPRSP…EKRISRAPSK (83 aa)) is disordered. Residues 240–250 (VSFTQESVSRA) show a composition bias toward polar residues. The segment covering 265–276 (LGKEDSQSERNV) has biased composition (basic and acidic residues). The VASt domain maps to 326-497 (QGRLYINRVF…DLLMEESVLS (172 aa)). The disordered stretch occupies residues 506–530 (HSSLRRRRRTLNRTAEPVPKLSSQR). Positions 507–516 (SSLRRRRRTL) are enriched in basic residues. Residues 557 to 577 (LIVVMSIFLLLLVLLNVTLFL) traverse the membrane as a helical segment.

In terms of tissue distribution, highly expressed in the liver. Also found in the testis.

The protein resides in the endoplasmic reticulum membrane. It localises to the cell membrane. Cholesterol transporter that mediates non-vesicular transport of cholesterol from the plasma membrane (PM) to the endoplasmic reticulum (ER). Contains unique domains for binding cholesterol and the PM, thereby serving as a molecular bridge for the transfer of cholesterol from the PM to the ER. Plays a crucial role in cholesterol homeostasis and has the unique ability to localize to the PM based on the level of membrane cholesterol. In lipid-poor conditions localizes to the ER membrane and in response to excess cholesterol in the PM is recruited to the endoplasmic reticulum-plasma membrane contact sites (EPCS) which is mediated by the GRAM domain. At the EPCS, the sterol-binding VASt/ASTER domain binds to the cholesterol in the PM and facilitates its transfer from the PM to ER. The polypeptide is Protein Aster-C (Gramd1c) (Mus musculus (Mouse)).